The primary structure comprises 577 residues: MARLSRERYAQLYGPTTGDRIRLADTDLLVEITEDRCGGPGLAGDEAVFGGGKVLRESMGQGRVTRAEGAPDTVITGAVIIDYWGIIKANIGIRDGRIVAIGKAGNPNIMSGIHPDLVVGPSTEIIGGNGRIVTAGAIDCHVHLICPQVIAEALSSGITTIIGGGTGPAEGSKSTTVTPGGWHLARMLEALDSWPVNIALLGKGNTVNPDALWEQLRGGASGFKLHEDWGKSPAAIDACLTVADAAGVQVALHSDTLNEMGFVEDTLAAIAGRSIHTYHTEGAGGGHAPDIITVAAHPNVLPSSTNPTRPHTVNALDEHLDMLMVCHHLNPRIPDDLAFAESRIRPSTIAAEDLLHDIGAISMIGSDSQAMGRVGEVVMRTWQTAHVMKQRRGALEGDPSGRYSADNNRARRYVAKYTICPAVAHGLDHEVGSVEVGKLADLVLWEPAFFGVRPHAVVKGGAIAWAAMGDANASIPTPQPVLPRPMFGASPAVAAATSVHFVAAQSIEAGLADQIAVDRRLVPVADVRAVGKADMPLNDAQPRIEVDPDTFTVRIDGEVWEQQPATELPMAQRYFLF.

The region spanning 136–577 (GAIDCHVHLI…LPMAQRYFLF (442 aa)) is the Urease domain. H141, H143, and K224 together coordinate Ni(2+). K224 is modified (N6-carboxylysine). A substrate-binding site is contributed by H226. 2 residues coordinate Ni(2+): H253 and H279. The Proton donor role is filled by H327. D367 serves as a coordination point for Ni(2+).

This sequence belongs to the metallo-dependent hydrolases superfamily. Urease alpha subunit family. Heterotrimer of UreA (gamma), UreB (beta) and UreC (alpha) subunits. Three heterotrimers associate to form the active enzyme. Requires Ni cation as cofactor. Carboxylation allows a single lysine to coordinate two nickel ions.

Its subcellular location is the cytoplasm. It carries out the reaction urea + 2 H2O + H(+) = hydrogencarbonate + 2 NH4(+). Its pathway is nitrogen metabolism; urea degradation; CO(2) and NH(3) from urea (urease route): step 1/1. The sequence is that of Urease subunit alpha from Mycobacterium ulcerans (strain Agy99).